Reading from the N-terminus, the 238-residue chain is Uridylate kinase (238 aa).

Residue 12–15 (KLSG) coordinates ATP. Gly54 is a binding site for UMP. Residues Gly55 and Arg59 each coordinate ATP. UMP-binding positions include Asp74 and 135 to 142 (TGNPFFTT). ATP-binding residues include Thr162, Tyr168, and Asp171.

This sequence belongs to the UMP kinase family. Homohexamer.

It is found in the cytoplasm. The catalysed reaction is UMP + ATP = UDP + ADP. It participates in pyrimidine metabolism; CTP biosynthesis via de novo pathway; UDP from UMP (UMPK route): step 1/1. With respect to regulation, inhibited by UTP. Catalyzes the reversible phosphorylation of UMP to UDP. The sequence is that of Uridylate kinase from Herminiimonas arsenicoxydans.